Consider the following 137-residue polypeptide: Large ribosomal subunit protein uL16 (137 aa).

The protein belongs to the universal ribosomal protein uL16 family. As to quaternary structure, part of the 50S ribosomal subunit.

In terms of biological role, binds 23S rRNA and is also seen to make contacts with the A and possibly P site tRNAs. This is Large ribosomal subunit protein uL16 from Methylocella silvestris (strain DSM 15510 / CIP 108128 / LMG 27833 / NCIMB 13906 / BL2).